A 474-amino-acid polypeptide reads, in one-letter code: MLRRYLTLSFSSLLLLALLFLTGCSFVRPQFRRGFRTQFKINSIPTVSDPYHINYDLTFSLNFASNKRNTYGTGWLIDWKGDENNPEKNDPFKVYLATNLHVIDALRNNNDYEPYNKDSNNQAFNSEEITRFFSIGKYTYPSIFSELNFIINAREAFVSIQTSTIPKTAYAAVNFVETQGEDESYTDSLSTDNKRDIYADFAVIEIPLFLTNHRDYQVFNEFIKPAIETYKQLGNSSFEKKQLDQHKNDNFYMLGYPLVESSIDALILNQRRQYNNSYTEKYTPQTLTKDQRTIDLSREVPTLIQNKTENSTGSQLLVNQSLSSTSEGIIEFIKLPEFKLNYHNKSYRQYGRGFALQNTNFRPGSSGTLMLNNQKQIAGIYFGVLDFGEDVSLMSNIGVGQILRVPQKNNTRNRSIATNKSNYDLIFGDSNTTNFYAKFARQNNTHLYQMISNSKDTKLKYVNTVEKTVKASIK.

A signal peptide spans 1 to 23; that stretch reads MLRRYLTLSFSSLLLLALLFLTG. Residue Cys-24 is the site of N-palmitoyl cysteine attachment. Cys-24 carries S-diacylglycerol cysteine lipidation.

This sequence belongs to the MG067/MG068/MG395 family.

Its subcellular location is the cell membrane. This is an uncharacterized protein from Mycoplasma genitalium (strain ATCC 33530 / DSM 19775 / NCTC 10195 / G37) (Mycoplasmoides genitalium).